Reading from the N-terminus, the 37-residue chain is MKTRPSVKPICERCKVIKRRGKVMVICSNPKHKQKQG.

The protein belongs to the bacterial ribosomal protein bL36 family.

This Natranaerobius thermophilus (strain ATCC BAA-1301 / DSM 18059 / JW/NM-WN-LF) protein is Large ribosomal subunit protein bL36.